The chain runs to 211 residues: N-(5'-phosphoribosyl)anthranilate isomerase (211 aa).

It belongs to the TrpF family.

It catalyses the reaction N-(5-phospho-beta-D-ribosyl)anthranilate = 1-(2-carboxyphenylamino)-1-deoxy-D-ribulose 5-phosphate. Its pathway is amino-acid biosynthesis; L-tryptophan biosynthesis; L-tryptophan from chorismate: step 3/5. The polypeptide is N-(5'-phosphoribosyl)anthranilate isomerase (Pseudomonas aeruginosa (strain UCBPP-PA14)).